The following is a 1385-amino-acid chain: DNA-directed RNA polymerase subunit beta' (1385 aa).

Zn(2+) contacts are provided by cysteine 72, cysteine 74, cysteine 87, and cysteine 90. 3 residues coordinate Mg(2+): aspartate 463, aspartate 465, and aspartate 467. Zn(2+) is bound by residues cysteine 813, cysteine 887, cysteine 894, and cysteine 897.

Belongs to the RNA polymerase beta' chain family. In terms of assembly, the RNAP catalytic core consists of 2 alpha, 1 beta, 1 beta' and 1 omega subunit. When a sigma factor is associated with the core the holoenzyme is formed, which can initiate transcription. The cofactor is Mg(2+). Requires Zn(2+) as cofactor.

The catalysed reaction is RNA(n) + a ribonucleoside 5'-triphosphate = RNA(n+1) + diphosphate. DNA-dependent RNA polymerase catalyzes the transcription of DNA into RNA using the four ribonucleoside triphosphates as substrates. This is DNA-directed RNA polymerase subunit beta' from Trichlorobacter lovleyi (strain ATCC BAA-1151 / DSM 17278 / SZ) (Geobacter lovleyi).